A 145-amino-acid polypeptide reads, in one-letter code: MKRPSSHGRRPPQGPSQRQLRAGELVRHALVEIFREEEINDPVLAGVSVTVTEVRVSPDLRHATVFVEPLGGEHADEVVQALNRHARFLRGHLGRAIELRFTPELKFLHDESFNEAARMAKLFDDPKVRQDLTPQPPSDSWKDED.

Positions 1-10 (MKRPSSHGRR) are enriched in basic residues. Disordered stretches follow at residues 1–21 (MKRP…RQLR) and 124–145 (DDPK…KDED).

It belongs to the RbfA family. In terms of assembly, monomer. Binds 30S ribosomal subunits, but not 50S ribosomal subunits or 70S ribosomes.

The protein resides in the cytoplasm. Its function is as follows. One of several proteins that assist in the late maturation steps of the functional core of the 30S ribosomal subunit. Associates with free 30S ribosomal subunits (but not with 30S subunits that are part of 70S ribosomes or polysomes). Required for efficient processing of 16S rRNA. May interact with the 5'-terminal helix region of 16S rRNA. The protein is Ribosome-binding factor A of Phenylobacterium zucineum (strain HLK1).